A 253-amino-acid chain; its full sequence is 5'-nucleotidase SurE (253 aa).

Residues Asp8, Asp9, Ser39, and Asn95 each coordinate a divalent metal cation.

It belongs to the SurE nucleotidase family. Requires a divalent metal cation as cofactor.

The protein localises to the cytoplasm. It catalyses the reaction a ribonucleoside 5'-phosphate + H2O = a ribonucleoside + phosphate. Nucleotidase that shows phosphatase activity on nucleoside 5'-monophosphates. This is 5'-nucleotidase SurE from Clostridium beijerinckii (strain ATCC 51743 / NCIMB 8052) (Clostridium acetobutylicum).